The primary structure comprises 846 residues: ATR-interacting protein mus304 (846 aa).

3 disordered regions span residues 20-40, 90-109, and 135-162; these read DVSVTRGSARPSPPRNNFDGI, QGSTSTQQMFPPPPPPQKKP, and EPQKMPEPKTSTSRITTSSISVQQKTTT. Over residues 144 to 162 the composition is skewed to low complexity; sequence TSTSRITTSSISVQQKTTT. Coiled coils occupy residues 168-240 and 327-359; these read ATQS…LADE and EYSENEDQTKKRRNHFELELKQLLLHYARLQAK. Residues 504–510 carry the EEXXXDL motif motif; sequence EELLFDL. The interval 651-681 is disordered; it reads GAVQGSVSNGSTSASVSNPNQNSNSSTTQRG. The span at 655–676 shows a compositional bias: low complexity; the sequence is GSVSNGSTSASVSNPNQNSNSS.

This sequence belongs to the ATRIP family. As to quaternary structure, interacts with ATR/mei-41. As to expression, highly expressed in the oocyte and nurse cells from stage 5 onward and in embryos prior to during nuclear division 14. Then, it decreases to background levels during interphase 14. Weakly or not expressed in stage embryos and imaginal disks.

The protein localises to the cytoplasm. DNA damage checkpoint protein required for chromosome break repair and for genomic stability during development. This is ATR-interacting protein mus304 (mus304) from Drosophila melanogaster (Fruit fly).